A 223-amino-acid chain; its full sequence is Sporulation-specific protein 19 (223 aa).

The N-terminal stretch at 1 to 20 is a signal peptide; that stretch reads MKKQILIVAAQSILCSTVFG. Asn198 carries GPI-anchor amidated asparagine lipidation. The propeptide at 199–223 is removed in mature form; the sequence is ASNFLTPTTVALAVLLTILLFIQAY.

In terms of processing, the GPI-anchor is attached to the protein in the endoplasmic reticulum and serves to target the protein to the cell surface. There, the glucosamine-inositol phospholipid moiety is cleaved off and the GPI-modified mannoprotein is covalently attached via its lipidless GPI glycan remnant to the 1,6-beta-glucan of the outer cell wall layer.

The protein localises to the secreted. It is found in the cell wall. Its subcellular location is the membrane. In terms of biological role, involved in sporulation. Essential for completion of the nuclear division. The chain is Sporulation-specific protein 19 (SPO19) from Saccharomyces cerevisiae (strain ATCC 204508 / S288c) (Baker's yeast).